The primary structure comprises 374 residues: Probable ethanolamine kinase (374 aa).

Residues Arg-93 and Asp-252 each contribute to the ATP site.

Belongs to the choline/ethanolamine kinase family.

The enzyme catalyses ethanolamine + ATP = phosphoethanolamine + ADP + H(+). It functions in the pathway phospholipid metabolism; phosphatidylethanolamine biosynthesis; phosphatidylethanolamine from ethanolamine: step 1/3. Involved in phospholipid biosynthesis. Catalyzes the first step in phosphatidylethanolamine biosynthesis. This Arabidopsis thaliana (Mouse-ear cress) protein is Probable ethanolamine kinase (EMB1187).